Here is a 256-residue protein sequence, read N- to C-terminus: 5-oxoprolinase subunit A 2 (256 aa).

Belongs to the LamB/PxpA family. Forms a complex composed of PxpA, PxpB and PxpC.

It carries out the reaction 5-oxo-L-proline + ATP + 2 H2O = L-glutamate + ADP + phosphate + H(+). Functionally, catalyzes the cleavage of 5-oxoproline to form L-glutamate coupled to the hydrolysis of ATP to ADP and inorganic phosphate. The protein is 5-oxoprolinase subunit A 2 of Bradyrhizobium diazoefficiens (strain JCM 10833 / BCRC 13528 / IAM 13628 / NBRC 14792 / USDA 110).